Here is a 71-residue protein sequence, read N- to C-terminus: uncharacterized protein (71 aa).

Residues 44–66 traverse the membrane as a helical segment; sequence LFFLVFRRLFSWFLVLLPSPRFF.

It localises to the membrane. This is an uncharacterized protein from Saccharomyces cerevisiae (strain ATCC 204508 / S288c) (Baker's yeast).